A 578-amino-acid polypeptide reads, in one-letter code: Interleukin-10 receptor subunit alpha (578 aa).

An N-terminal signal peptide occupies residues 1-21 (MLPCLVVLLAALLSLRLGSDA). Over 22–235 (HGTELPSPPS…LTRQYFTVTN (214 aa)) the chain is Extracellular. N-linked (GlcNAc...) asparagine glycans are attached at residues N50, N74, N110, N154, N177, and N189. C56 and C75 are oxidised to a cystine. A disulfide bond links C202 and C223. The chain crosses the membrane as a helical span at residues 236–256 (VIIFFAFVLLLSGALAYCLAL). Over 257 to 578 (QLYVRRRKKL…PLISSLQSSE (322 aa)) the chain is Cytoplasmic. Positions 313–436 (LHGSTDSGFG…PPEPEVPGEE (124 aa)) are disordered. Residues 316-332 (STDSGFGSTKPSLQTEE) show a composition bias toward polar residues. The BTRC recognition motif motif lies at 318 to 323 (DSGFGS). Low complexity predominate over residues 357–371 (GDSCSSGSSNSTDSG). The segment covering 377–396 (PSLSPSTGPTWEQQVGSNSR) has biased composition (polar residues).

The protein belongs to the type II cytokine receptor family. Interacts with IL10. Interacts with IL10RB. Interacts (via its cytoplasmic domain) with JAK1 (via N-terminus). Interacts with BTRC; this interaction leads to IL10RA ubiquitination and subsequent degradation. Interacts with STAT3. As to quaternary structure, (Microbial infection) Interacts with human cytomegalovirus protein IL10. In terms of assembly, (Microbial infection) Interacts with Epstein-Barr virus protein IL10. Post-translationally, phosphorylated. Phosphorylation of the cytoplasmic tail induced STAT3 activation. Ubiquitinated by BTRC; ubiquitination leads to endocytosis and subsequent degradation of IL10RA. In terms of tissue distribution, primarily expressed in hematopoetic cells including B-cells, T-cells, NK cells, monocytes and macrophages. Not expressed in non-hematopoetic cells such as fibroblasts or endothelial cells.

It is found in the cell membrane. Its subcellular location is the cytoplasm. Functionally, cell surface receptor for the cytokine IL10 that participates in IL10-mediated anti-inflammatory functions, limiting excessive tissue disruption caused by inflammation. Upon binding to IL10, induces a conformational change in IL10RB, allowing IL10RB to bind IL10 as well. In turn, the heterotetrameric assembly complex, composed of two subunits of IL10RA and IL10RB, activates the kinases JAK1 and TYK2 that are constitutively associated with IL10RA and IL10RB respectively. These kinases then phosphorylate specific tyrosine residues in the intracellular domain in IL10RA leading to the recruitment and subsequent phosphorylation of STAT3. Once phosphorylated, STAT3 homodimerizes, translocates to the nucleus and activates the expression of anti-inflammatory genes. In addition, IL10RA-mediated activation of STAT3 inhibits starvation-induced autophagy. This Homo sapiens (Human) protein is Interleukin-10 receptor subunit alpha (IL10RA).